The primary structure comprises 92 residues: Parbolysin P7 (92 aa).

3 disulfides stabilise this stretch: C15–C36, C21–C32, and C46–C59.

This sequence belongs to the worm cytolysin family. In terms of tissue distribution, localized within the skin and proboscis and are most readily isolated from body mucus secretions.

The protein resides in the secreted. In terms of biological role, cytolysin that shows hemolytic activity (on bovine erythrocytes, HC(50)=5.75 mg/ml). This hemolytic activity is completely inhibited by small unilamelar vesicles composed of PC/PG, PC/PI and PC/PS in 1:1 molar ratios (with at least 100 mg/ml concentration). This is Parbolysin P7 from Parborlasia corrugatus (Antarctic nemertean worm).